The sequence spans 372 residues: L-selectin (372 aa).

The first 28 residues, 1-28 (MIFPWKCQSTQRDLCNIFKLWGWTMLCC), serve as a signal peptide directing secretion. Residues 29–38 (DFLAHHGTDC) constitute a propeptide that is removed on maturation. Residues 39–332 (WTYHYSEKPM…FSMIKEGDYN (294 aa)) lie on the Extracellular side of the membrane. Positions 55–155 (RFCRENYTDL…ACHKLKAALC (101 aa)) constitute a C-type lectin domain. 10 disulfides stabilise this stretch: C57–C155, C128–C147, C128–C160, C160–C171, C165–C180, C182–C191, C197–C241, C227–C254, C259–C303, and C289–C316. N-linked (GlcNAc...) asparagine glycosylation is found at N60 and N104. Residues E118, N120, E126, N143, and D144 each contribute to the Ca(2+) site. The 37-residue stretch at 156–192 (YTASCQPWSCSGHGECVEIINNYTCNCDVGYYGPQCQ) folds into the EGF-like domain. N-linked (GlcNAc...) asparagine glycosylation is present at N177. 2 consecutive Sushi domains span residues 195–256 (IQCE…TCQV) and 257–318 (IQCE…ICQK). Residues N216, N226, N232, N246, and N271 are each glycosylated (N-linked (GlcNAc...) asparagine). A helical membrane pass occupies residues 333 to 355 (PLFIPVAVMVTAFSGLAFIIWLA). Over 356-372 (RRLKKGKKSKKSMDDPY) the chain is Cytoplasmic.

The protein belongs to the selectin/LECAM family. Interaction with SELPLG/PSGL1 and PODXL2 is required for promoting recruitment and rolling of leukocytes. This interaction is dependent on the sialyl Lewis X glycan modification of SELPLG and PODXL2, and tyrosine sulfation modifications of SELPLG. Sulfation on 'Tyr-51' of SELPLG is important for L-selectin binding. In terms of processing, N-glycosylated.

It is found in the cell membrane. Functionally, calcium-dependent lectin that mediates cell adhesion by binding to glycoproteins on neighboring cells. Mediates the adherence of lymphocytes to endothelial cells of high endothelial venules in peripheral lymph nodes. Promotes initial tethering and rolling of leukocytes in endothelia. The polypeptide is L-selectin (SELL) (Pongo pygmaeus (Bornean orangutan)).